Consider the following 496-residue polypeptide: MSNQHIEELNDQQIVRREKMAALTEQGIDPFGKRFERTATSGQLNEKYADKSKEDLHDIEETATIAGRLMTKRGKGKVGFAHIQDREGQIQIYVRKDSVGEENYEIFKKADLGDFLGVEGQVMRTDMGELSIKATHITHLSKALRPLPEKFHGLTDIETIYRKRHLDLISNRDSFDRFVTRSKIISEIRRFMDSNGFLEVETPVLHNEAGGASARPFITHHNAQDIDMVLRIATELHLKRLIVGGMERVYEIGRIFRNEGMDATHNPEFTSIEAYQAYADYQDIMDLTEGIIQHVTKTVKGDGPINYQGTEIKINEPFKRVHMVDAVKEITGIDFWKEMTLEEAQALAQEKNVPLEKHFTTVGHIINAFFEEFVEDTLIQPTFVFGHPVEVSPLAKKNDTDPRFTDRFELFIMTKEYANAFTELNDPIDQLSRFEAQASAKELGDDEATGVDYDYVEALEYGMPPTGGLGIGIDRLCMLLTDTTTIRDVLLFPTMK.

Mg(2+)-binding residues include E409 and E416.

This sequence belongs to the class-II aminoacyl-tRNA synthetase family. As to quaternary structure, homodimer. The cofactor is Mg(2+).

It localises to the cytoplasm. The catalysed reaction is tRNA(Lys) + L-lysine + ATP = L-lysyl-tRNA(Lys) + AMP + diphosphate. The polypeptide is Lysine--tRNA ligase (Streptococcus agalactiae serotype III (strain NEM316)).